Reading from the N-terminus, the 213-residue chain is Uridine kinase (213 aa).

15 to 22 is a binding site for ATP; it reads GASASGKS.

The protein belongs to the uridine kinase family.

Its subcellular location is the cytoplasm. The enzyme catalyses uridine + ATP = UMP + ADP + H(+). The catalysed reaction is cytidine + ATP = CMP + ADP + H(+). Its pathway is pyrimidine metabolism; CTP biosynthesis via salvage pathway; CTP from cytidine: step 1/3. It participates in pyrimidine metabolism; UMP biosynthesis via salvage pathway; UMP from uridine: step 1/1. The sequence is that of Uridine kinase from Yersinia enterocolitica serotype O:8 / biotype 1B (strain NCTC 13174 / 8081).